The chain runs to 90 residues: Protein RL8A (90 aa).

Residues 15–34 form a helical membrane-spanning segment; it reads WTCEGLLLLLGLLVLFFHHH. The tract at residues 55–90 is disordered; the sequence is HESGWYSSDDDGDRDGDEETGESHNRNSVGLSAVFS. Positions 62 to 74 are enriched in acidic residues; sequence SDDDGDRDGDEET. Residues 80–90 are compositionally biased toward polar residues; sequence RNSVGLSAVFS.

Its subcellular location is the host membrane. This is Protein RL8A (RL8A) from Homo sapiens (Human).